Consider the following 321-residue polypeptide: Biotin synthase (321 aa).

A Radical SAM core domain is found at 45-271; sequence YYGKKVKLNM…INPTKEIRIA (227 aa). Residues cysteine 63, cysteine 67, and cysteine 70 each coordinate [4Fe-4S] cluster. The [2Fe-2S] cluster site is built by cysteine 106, cysteine 139, cysteine 199, and arginine 269.

Belongs to the radical SAM superfamily. Biotin synthase family. In terms of assembly, homodimer. Requires [4Fe-4S] cluster as cofactor. [2Fe-2S] cluster serves as cofactor.

It catalyses the reaction (4R,5S)-dethiobiotin + (sulfur carrier)-SH + 2 reduced [2Fe-2S]-[ferredoxin] + 2 S-adenosyl-L-methionine = (sulfur carrier)-H + biotin + 2 5'-deoxyadenosine + 2 L-methionine + 2 oxidized [2Fe-2S]-[ferredoxin]. Its pathway is cofactor biosynthesis; biotin biosynthesis; biotin from 7,8-diaminononanoate: step 2/2. In terms of biological role, catalyzes the conversion of dethiobiotin (DTB) to biotin by the insertion of a sulfur atom into dethiobiotin via a radical-based mechanism. This chain is Biotin synthase, found in Staphylococcus epidermidis (strain ATCC 35984 / DSM 28319 / BCRC 17069 / CCUG 31568 / BM 3577 / RP62A).